The sequence spans 71 residues: MANLKAVFLICIVAFIAFQCVVAEPAAEDSIVVKRSIGSALKKALPVAKKIGKIALPIAKAALPVAAGLVG.

The signal sequence occupies residues 1–23 (MANLKAVFLICIVAFIAFQCVVA). 2 consecutive propeptides follow at residues 24–35 (EPAAEDSIVVKR) and 65–71 (VAAGLVG).

Homomer of four to six subunits.

It localises to the secreted. Female-specific peptides with potent activity against Gram-positive and Gram-negative bacteria. They have as well hemolytic activity. In Ceratitis capitata (Mediterranean fruit fly), this protein is Ceratotoxin-A (CTXA2).